A 35-amino-acid polypeptide reads, in one-letter code: Small toxic polypeptide LdrA (35 aa).

The chain crosses the membrane as a helical span at residues 8–28 (MIFWHDLAAPILAGIITAAIV).

The protein belongs to the Ldr toxic peptide family.

It is found in the cell inner membrane. In terms of biological role, toxic component of a type I toxin-antitoxin (TA) system. Inhibits ATP synthesis possibly due to its insertion in the cell inner membrane, ATP levels drop over 50% 2 minutes after induction. Overexpression is toxic leading to cell death, it inhibits cell growth within 30 minutes; C-terminally tagged versions of the protein are toxic while N-terminally tagged versions are not. This is Small toxic polypeptide LdrA (ldrA) from Escherichia coli (strain K12).